The primary structure comprises 262 residues: 4-hydroxy-2-oxo-heptane-1,7-dioate aldolase (262 aa).

H45 functions as the Proton acceptor in the catalytic mechanism. Q147 contacts substrate. Residue E149 coordinates a divalent metal cation. Residues A174 and D175 each coordinate substrate. D175 lines the a divalent metal cation pocket.

Belongs to the HpcH/HpaI aldolase family. Homohexamer; trimer of dimers. A divalent metal cation is required as a cofactor.

The enzyme catalyses 4-hydroxy-2-oxoheptanedioate = succinate semialdehyde + pyruvate. Its pathway is aromatic compound metabolism; 4-hydroxyphenylacetate degradation; pyruvate and succinate semialdehyde from 4-hydroxyphenylacetate: step 7/7. Functionally, catalyzes the reversible retro-aldol cleavage of 4-hydroxy-2-ketoheptane-1,7-dioate (HKHD) to pyruvate and succinic semialdehyde. This Shigella boydii serotype 4 (strain Sb227) protein is 4-hydroxy-2-oxo-heptane-1,7-dioate aldolase.